The chain runs to 288 residues: Phospholipid phosphatase 2 (288 aa).

Topologically, residues 1–4 (MQRR) are cytoplasmic. A helical membrane pass occupies residues 5-25 (WVFVLLDVLCLLVASLPFAIL). Residues 26–51 (TLVNAPYKRGFYCGDDSIRYPYRPDT) are Lumenal-facing. A helical membrane pass occupies residues 52 to 72 (ITHGLMAGVTITATVILVSAG). Topologically, residues 73 to 87 (EAYLVYTDRLYSRSD) are cytoplasmic. The helical transmembrane segment at 88 to 108 (FNNYVAAVYKVLGTFLFGAAV) threads the bilayer. Over 109–162 (SQSLTDLAKYMIGRLRPNFLAVCDPDWSRVNCSVYVQLEKVCRGNPADVTEARL) the chain is Lumenal. A phosphatase sequence motif I region spans residues 117–125 (KYMIGRLRP). A glycan (N-linked (GlcNAc...) asparagine) is linked at Asn139. Residues 163–183 (SFYSGHSSFGMYCMVFLALYV) traverse the membrane as a helical segment. Residues 165-168 (YSGH) form a phosphatase sequence motif II region. The Proton donors role is filled by His168. The Cytoplasmic portion of the chain corresponds to 184-196 (QARLCWKWARLLR). The helical transmembrane segment at 197–217 (PTVQFFLVAFALYVGYTRVSD) threads the bilayer. The interval 213–224 (TRVSDYKHHWSD) is phosphatase sequence motif III. Residues 218–226 (YKHHWSDVL) lie on the Lumenal side of the membrane. Catalysis depends on His220, which acts as the Nucleophile. Residues 227–247 (VGLLQGALVAALTVCYISDFF) form a helical membrane-spanning segment. At 248–288 (KARPPQHCLKEEELERKPSLSLTLTLGEADHNHYGYPHSSS) the chain is on the cytoplasmic side.

Belongs to the PA-phosphatase related phosphoesterase family. Forms functional homodimers and homooligomers. Can also form heterooligomers with PLPP1 and PLPP3. N-glycosylated. In terms of tissue distribution, found mainly in brain, pancreas and placenta.

Its subcellular location is the membrane. The protein localises to the cell membrane. It localises to the early endosome membrane. The protein resides in the endoplasmic reticulum membrane. The catalysed reaction is a 1,2-diacyl-sn-glycero-3-phosphate + H2O = a 1,2-diacyl-sn-glycerol + phosphate. The enzyme catalyses 1,2-dihexadecanoyl-sn-glycero-3-phosphate + H2O = 1,2-dihexadecanoyl-sn-glycerol + phosphate. It catalyses the reaction 1,2-di-(9Z-octadecenoyl)-sn-glycero-3-phosphate + H2O = 1,2-di-(9Z-octadecenoyl)-sn-glycerol + phosphate. It carries out the reaction a monoacyl-sn-glycero-3-phosphate + H2O = a monoacylglycerol + phosphate. The catalysed reaction is (9Z)-octadecenoyl-sn-glycero-3-phosphate + H2O = (9Z-octadecenoyl)-glycerol + phosphate. The enzyme catalyses sphing-4-enine 1-phosphate + H2O = sphing-4-enine + phosphate. It catalyses the reaction an N-acylsphing-4-enine 1-phosphate + H2O = an N-acylsphing-4-enine + phosphate. It carries out the reaction N-(octanoyl)-sphing-4-enine-1-phosphate + H2O = N-octanoylsphing-4-enine + phosphate. The catalysed reaction is N-(9Z-octadecenoyl)-ethanolamine phosphate + H2O = N-(9Z-octadecenoyl) ethanolamine + phosphate. Its pathway is lipid metabolism; phospholipid metabolism. Magnesium-independent phospholipid phosphatase. Insensitive to N-ethylmaleimide. Inhibited by sphingosine, zinc ions and modestly by propanolol. In terms of biological role, magnesium-independent phospholipid phosphatase that catalyzes the dephosphorylation of a variety of glycerolipid and sphingolipid phosphate esters including phosphatidate/PA, lysophosphatidate/LPA, sphingosine 1-phosphate/S1P and ceramide 1-phosphate/C1P. Has no apparent extracellular phosphatase activity and therefore most probably acts intracellularly. Also acts on N-oleoyl ethanolamine phosphate/N-(9Z-octadecenoyl)-ethanolamine phosphate, a potential physiological compound. Through dephosphorylation of these bioactive lipid mediators produces new bioactive compounds and may regulate signal transduction in different cellular processes. Indirectly regulates, for instance, cell cycle G1/S phase transition through its phospholipid phosphatase activity. The protein is Phospholipid phosphatase 2 of Homo sapiens (Human).